Here is a 367-residue protein sequence, read N- to C-terminus: DNA replication and repair protein RecF (367 aa).

ATP is bound at residue 30-37 (GANGSGKT).

It belongs to the RecF family.

It localises to the cytoplasm. Its function is as follows. The RecF protein is involved in DNA metabolism; it is required for DNA replication and normal SOS inducibility. RecF binds preferentially to single-stranded, linear DNA. It also seems to bind ATP. The polypeptide is DNA replication and repair protein RecF (Pseudomonas fluorescens (strain Pf0-1)).